The primary structure comprises 276 residues: Formamidopyrimidine-DNA glycosylase (276 aa).

The active-site Schiff-base intermediate with DNA is the Pro2. Glu3 acts as the Proton donor in catalysis. The Proton donor; for beta-elimination activity role is filled by Lys58. DNA-binding residues include His94, Arg112, and Arg157. The segment at 242–276 adopts an FPG-type zinc-finger fold; it reads FVYDRAGLPCRVCGTPIKQIVQGQRSTYFCPTCQR. Arg266 acts as the Proton donor; for delta-elimination activity in catalysis.

The protein belongs to the FPG family. As to quaternary structure, monomer. Requires Zn(2+) as cofactor.

It carries out the reaction Hydrolysis of DNA containing ring-opened 7-methylguanine residues, releasing 2,6-diamino-4-hydroxy-5-(N-methyl)formamidopyrimidine.. The enzyme catalyses 2'-deoxyribonucleotide-(2'-deoxyribose 5'-phosphate)-2'-deoxyribonucleotide-DNA = a 3'-end 2'-deoxyribonucleotide-(2,3-dehydro-2,3-deoxyribose 5'-phosphate)-DNA + a 5'-end 5'-phospho-2'-deoxyribonucleoside-DNA + H(+). Involved in base excision repair of DNA damaged by oxidation or by mutagenic agents. Acts as a DNA glycosylase that recognizes and removes damaged bases. Has a preference for oxidized purines, such as 7,8-dihydro-8-oxoguanine (8-oxoG). Has AP (apurinic/apyrimidinic) lyase activity and introduces nicks in the DNA strand. Cleaves the DNA backbone by beta-delta elimination to generate a single-strand break at the site of the removed base with both 3'- and 5'-phosphates. The sequence is that of Formamidopyrimidine-DNA glycosylase from Paraburkholderia xenovorans (strain LB400).